The primary structure comprises 896 residues: MKRHLNDVVLVFLVFIFGVKLGKGQNTTIQVINVGVVTDVGTTASNLSLLAINMSLSDFYSSRPESRTRLLLNFADSRDDVVGAAAAALDLIKNKEVKAILGPRTTMQASFVIEVGQKSQVPIISFSATSPFLDSGRSPYFFRSTYDDSSQVQAISEIIKVFGWREVVPVYENNAFGEGIMPGLTDALQAINIRIPYRTVISPNATDDEISVDLLKLMTKPTRVFVVHMNRFLASRVFSKARETGLMKQGYAWILTNGVIDHLVLMNGTDIEAMQGVIGIRTHFPISEELQTFRSRLAKAFPVSELNIYGLRAYDATTALAMAVEEAGTTNLTFSKMDGRNISDLEALSVSEYGPKLIRSLSQIQFKGLSGDYHFVDGQLHASVFEIVNVIDGGGILVGFWTQDKGLVKDLSPSSGTTRTFSSWKNHLNPILWPGITLTVPKGWEIPTNGKELQIGVPVGTFPQFVKVTTDPLTHETIVTGFCIDFFEAVIQAMPYDVSHRFIPFGDDDGKTNVFDAVVGDTTILANRSSYVDFTLPYTTSGVGMVVPLKDNVARSSLIFFKPLTPGLWGMTLGSFFVVGFVVWILEHRVNSEFTGPPQYQISTMFWFAFSIMVFAPRERVMSFTARVVVITWYFIVLVLTQSYTASLSSLLTTQQLNPTETSIKNVLAKGGPVAYQRDSFVLGKLRESGFPESRLVPFTSPEKCEELLNKGPSKGGVSAAFMEVPYVRVFLGQYCKKYKMVEVPFDVDGFGFVFPIGSPLVADVSRAILKVAESNKATQLETAWFKNIDKTCPDPMNNPDPNPTVSFRKLSLDSFLLLFVAAATVCTLALLKFVICFLIQNRIILNDEFYRGKRMKEMWLKFMESDGESYISRVRSTCPQVLIQPREEDIDPING.

An N-terminal signal peptide occupies residues 1-24 (MKRHLNDVVLVFLVFIFGVKLGKG). The Extracellular segment spans residues 25-565 (QNTTIQVINV…SSLIFFKPLT (541 aa)). 8 N-linked (GlcNAc...) asparagine glycosylation sites follow: Asn26, Asn46, Asn53, Asn204, Asn267, Asn331, Asn341, and Asn527. The chain crosses the membrane as a helical span at residues 566–586 (PGLWGMTLGSFFVVGFVVWIL). Residues 587–595 (EHRVNSEFT) are Cytoplasmic-facing. The helical transmembrane segment at 596 to 616 (GPPQYQISTMFWFAFSIMVFA) threads the bilayer. Residues 617–620 (PRER) are Cytoplasmic-facing. A helical membrane pass occupies residues 621-641 (VMSFTARVVVITWYFIVLVLT). Topologically, residues 642–815 (QSYTASLSSL…VSFRKLSLDS (174 aa)) are extracellular. The chain crosses the membrane as a helical span at residues 816 to 836 (FLLLFVAAATVCTLALLKFVI). The Cytoplasmic portion of the chain corresponds to 837–896 (CFLIQNRIILNDEFYRGKRMKEMWLKFMESDGESYISRVRSTCPQVLIQPREEDIDPING).

The protein belongs to the glutamate-gated ion channel (TC 1.A.10.1) family. May form heteromers. Expressed predominantly in roots.

Its subcellular location is the membrane. Its function is as follows. Glutamate-gated receptor that probably acts as a non-selective cation channel. May be involved in light-signal transduction and calcium homeostasis via the regulation of calcium influx into cells. The sequence is that of Glutamate receptor 2.4 (GLR2.4) from Arabidopsis thaliana (Mouse-ear cress).